An 861-amino-acid polypeptide reads, in one-letter code: Leucine--tRNA ligase (861 aa).

Residues 42 to 52 (PYPSGRLHMGH) carry the 'HIGH' region motif. The 'KMSKS' region motif lies at 619–623 (KMSKS). Lys-622 contributes to the ATP binding site.

The protein belongs to the class-I aminoacyl-tRNA synthetase family.

The protein resides in the cytoplasm. The enzyme catalyses tRNA(Leu) + L-leucine + ATP = L-leucyl-tRNA(Leu) + AMP + diphosphate. The chain is Leucine--tRNA ligase from Haemophilus influenzae (strain PittGG).